Reading from the N-terminus, the 466-residue chain is Ribosomal protein uS12 methylthiotransferase RimO (466 aa).

One can recognise an MTTase N-terminal domain in the interval 18–133 (PRIGFVSLGC…VMDAVHQHVP (116 aa)). [4Fe-4S] cluster-binding residues include cysteine 27, cysteine 63, cysteine 92, cysteine 164, cysteine 168, and cysteine 171. In terms of domain architecture, Radical SAM core spans 150-391 (LTPKHYAYLK…MAVAEAVSTA (242 aa)). Residues 394 to 466 (QRRVGSSMQV…QGHDLIGELI (73 aa)) enclose the TRAM domain.

It belongs to the methylthiotransferase family. RimO subfamily. Requires [4Fe-4S] cluster as cofactor.

The protein localises to the cytoplasm. It carries out the reaction L-aspartate(89)-[ribosomal protein uS12]-hydrogen + (sulfur carrier)-SH + AH2 + 2 S-adenosyl-L-methionine = 3-methylsulfanyl-L-aspartate(89)-[ribosomal protein uS12]-hydrogen + (sulfur carrier)-H + 5'-deoxyadenosine + L-methionine + A + S-adenosyl-L-homocysteine + 2 H(+). Its function is as follows. Catalyzes the methylthiolation of an aspartic acid residue of ribosomal protein uS12. This Leptothrix cholodnii (strain ATCC 51168 / LMG 8142 / SP-6) (Leptothrix discophora (strain SP-6)) protein is Ribosomal protein uS12 methylthiotransferase RimO.